The following is a 547-amino-acid chain: Chaperonin GroEL (547 aa).

Residues 30-33 (TLGP), K51, 87-91 (DGTTT), G415, and D496 contribute to the ATP site.

Belongs to the chaperonin (HSP60) family. In terms of assembly, forms a cylinder of 14 subunits composed of two heptameric rings stacked back-to-back. Interacts with the co-chaperonin GroES.

The protein resides in the cytoplasm. It catalyses the reaction ATP + H2O + a folded polypeptide = ADP + phosphate + an unfolded polypeptide.. Functionally, together with its co-chaperonin GroES, plays an essential role in assisting protein folding. The GroEL-GroES system forms a nano-cage that allows encapsulation of the non-native substrate proteins and provides a physical environment optimized to promote and accelerate protein folding. This is Chaperonin GroEL from Actinobacillus pleuropneumoniae serotype 5b (strain L20).